The primary structure comprises 254 residues: Probable phosphoglycerate mutase 4 (254 aa).

Residues 10–17 (RHGESTWN) and 23–24 (SC) contribute to the substrate site. The active-site Tele-phosphohistidine intermediate is histidine 11. 2 positions are modified to phosphoserine: serine 14 and serine 23. Phosphotyrosine is present on tyrosine 26. Serine 31 is subject to Phosphoserine. Residues arginine 62, 89 to 92 (ERHY), and lysine 100 contribute to the substrate site. Glutamate 89 serves as the catalytic Proton donor/acceptor. At lysine 106 the chain carries N6-acetyllysine. 116 to 117 (RR) is a binding site for substrate. Position 118 is a phosphoserine (serine 118). 187 to 188 (GN) is a binding site for substrate. Lysine 251 is subject to N6-acetyllysine; alternate. An N6-succinyllysine; alternate modification is found at lysine 251. N6-acetyllysine occurs at positions 253 and 254.

This sequence belongs to the phosphoglycerate mutase family. BPG-dependent PGAM subfamily.

It carries out the reaction (2R)-2-phosphoglycerate = (2R)-3-phosphoglycerate. It catalyses the reaction (2R)-3-phospho-glyceroyl phosphate = (2R)-2,3-bisphosphoglycerate + H(+). The sequence is that of Probable phosphoglycerate mutase 4 (PGAM4) from Pan troglodytes (Chimpanzee).